A 1075-amino-acid chain; its full sequence is DNA-directed RNA polymerase subunit beta (1075 aa).

The protein belongs to the RNA polymerase beta chain family. As to quaternary structure, in plastids the minimal PEP RNA polymerase catalytic core is composed of four subunits: alpha, beta, beta', and beta''. When a (nuclear-encoded) sigma factor is associated with the core the holoenzyme is formed, which can initiate transcription.

It localises to the plastid. It is found in the chloroplast. It carries out the reaction RNA(n) + a ribonucleoside 5'-triphosphate = RNA(n+1) + diphosphate. Functionally, DNA-dependent RNA polymerase catalyzes the transcription of DNA into RNA using the four ribonucleoside triphosphates as substrates. This Pinus thunbergii (Japanese black pine) protein is DNA-directed RNA polymerase subunit beta.